Consider the following 229-residue polypeptide: Ras-like protein rasV (229 aa).

40–47 is a GTP binding site; it reads GDGGVGKT. The short motif at 62–70 is the Effector region element; it reads YDPTIEDSY. Residues 87–91 and 146–149 each bind GTP; these read DTAGQ and NKSD. C226 bears the Cysteine methyl ester mark. Residue C226 is the site of S-geranylgeranyl cysteine attachment. A propeptide spans 227-229 (removed in mature form); the sequence is KVM.

Belongs to the small GTPase superfamily. Ras family.

The protein localises to the cell membrane. The enzyme catalyses GTP + H2O = GDP + phosphate + H(+). Ras proteins bind GDP/GTP and possess intrinsic GTPase activity. The chain is Ras-like protein rasV (rasV) from Dictyostelium discoideum (Social amoeba).